A 908-amino-acid chain; its full sequence is ATP-dependent DNA helicase DDX31 (908 aa).

Residues 55 to 165 (KNENNLNNNK…EESNAIESNS (111 aa)) are disordered. A compositionally biased stretch (low complexity) spans 56–122 (NENNLNNNKN…NSNNNNLNKK (67 aa)). Over residues 124–144 (TFLEKKIQQEQKQKELKELKG) the composition is skewed to basic and acidic residues. Positions 207–236 (MNWGSLQLSETLVRNLVGHMKHEKPTHIQE) match the Q motif motif. Residues 239–422 (ITPILKGNDA…SLSLTSPVYI (184 aa)) enclose the Helicase ATP-binding domain. An ATP-binding site is contributed by 252 to 259 (AQTGSGKT). A DEAD box motif is present at residues 363 to 366 (DEAD). Residues 518-738 (DKERGVKRTK…QLESQVHDLQ (221 aa)) enclose the Helicase C-terminal domain. A compositionally biased stretch (basic and acidic residues) spans 519–537 (KERGVKRTKKEQIKQDKLI). Disordered regions lie at residues 519 to 590 (KERG…KEAT) and 872 to 908 (RNERDEADKNSNPKEIKEKKRRLYDKKIESNKKFKSK). Residues 553 to 580 (ESDDEESDNDDSDDSDSNNSDSETDEEK) show a composition bias toward acidic residues. Composition is skewed to basic and acidic residues over residues 872–889 (RNERDEADKNSNPKEIKE) and 896–908 (DKKIESNKKFKSK).

This sequence belongs to the DEAD box helicase family. DDX31/DBP7 subfamily.

Its subcellular location is the nucleus. The protein resides in the nucleolus. The enzyme catalyses ATP + H2O = ADP + phosphate + H(+). May have DNA helicase activity and RNA helicase activity. Probably have ssDNA and RNA dependent ATPase activity. This Dictyostelium discoideum (Social amoeba) protein is ATP-dependent DNA helicase DDX31 (ddx31).